The primary structure comprises 654 residues: Smc-like protein Sph3 (654 aa).

2 coiled-coil regions span residues 135–290 (TDAI…LQTV) and 341–503 (IRGT…LTAA).

Belongs to the Sph1/Sph2 family.

In terms of biological role, involved in cell-shape determination. Required for the formation of rods and wild-type-like motility. The chain is Smc-like protein Sph3 from Haloferax volcanii (strain ATCC 29605 / DSM 3757 / JCM 8879 / NBRC 14742 / NCIMB 2012 / VKM B-1768 / DS2) (Halobacterium volcanii).